A 249-amino-acid chain; its full sequence is 1-(5-phosphoribosyl)-5-[(5-phosphoribosylamino)methylideneamino] imidazole-4-carboxamide isomerase (249 aa).

Asp11 (proton acceptor) is an active-site residue. Residue Asp132 is the Proton donor of the active site.

Belongs to the HisA/HisF family.

The protein localises to the cytoplasm. The catalysed reaction is 1-(5-phospho-beta-D-ribosyl)-5-[(5-phospho-beta-D-ribosylamino)methylideneamino]imidazole-4-carboxamide = 5-[(5-phospho-1-deoxy-D-ribulos-1-ylimino)methylamino]-1-(5-phospho-beta-D-ribosyl)imidazole-4-carboxamide. It functions in the pathway amino-acid biosynthesis; L-histidine biosynthesis; L-histidine from 5-phospho-alpha-D-ribose 1-diphosphate: step 4/9. This Nitrobacter winogradskyi (strain ATCC 25391 / DSM 10237 / CIP 104748 / NCIMB 11846 / Nb-255) protein is 1-(5-phosphoribosyl)-5-[(5-phosphoribosylamino)methylideneamino] imidazole-4-carboxamide isomerase.